Consider the following 224-residue polypeptide: ATP phosphoribosyltransferase (224 aa).

The protein belongs to the ATP phosphoribosyltransferase family. Short subfamily. Heteromultimer composed of HisG and HisZ subunits.

The protein resides in the cytoplasm. It catalyses the reaction 1-(5-phospho-beta-D-ribosyl)-ATP + diphosphate = 5-phospho-alpha-D-ribose 1-diphosphate + ATP. It participates in amino-acid biosynthesis; L-histidine biosynthesis; L-histidine from 5-phospho-alpha-D-ribose 1-diphosphate: step 1/9. Functionally, catalyzes the condensation of ATP and 5-phosphoribose 1-diphosphate to form N'-(5'-phosphoribosyl)-ATP (PR-ATP). Has a crucial role in the pathway because the rate of histidine biosynthesis seems to be controlled primarily by regulation of HisG enzymatic activity. This is ATP phosphoribosyltransferase from Cupriavidus metallidurans (strain ATCC 43123 / DSM 2839 / NBRC 102507 / CH34) (Ralstonia metallidurans).